The sequence spans 135 residues: Putative pre-16S rRNA nuclease (135 aa).

Belongs to the YqgF nuclease family.

It localises to the cytoplasm. Could be a nuclease involved in processing of the 5'-end of pre-16S rRNA. This chain is Putative pre-16S rRNA nuclease, found in Buchnera aphidicola subsp. Acyrthosiphon pisum (strain 5A).